Reading from the N-terminus, the 697-residue chain is Elongation factor G 1 (697 aa).

Positions 8 to 283 (ERYRNFGIMA…AVVDFLPSPV (276 aa)) constitute a tr-type G domain. GTP is bound by residues 17-24 (AHIDAGKT), 81-85 (DTPGH), and 135-138 (NKMD).

The protein belongs to the TRAFAC class translation factor GTPase superfamily. Classic translation factor GTPase family. EF-G/EF-2 subfamily.

The protein resides in the cytoplasm. Catalyzes the GTP-dependent ribosomal translocation step during translation elongation. During this step, the ribosome changes from the pre-translocational (PRE) to the post-translocational (POST) state as the newly formed A-site-bound peptidyl-tRNA and P-site-bound deacylated tRNA move to the P and E sites, respectively. Catalyzes the coordinated movement of the two tRNA molecules, the mRNA and conformational changes in the ribosome. This Anaeromyxobacter dehalogenans (strain 2CP-C) protein is Elongation factor G 1.